Consider the following 72-residue polypeptide: UPF0154 protein BH2350 (72 aa).

Residues 3–23 (WMILLWITLGIVIGIAIGFFI) traverse the membrane as a helical segment.

Belongs to the UPF0154 family.

The protein resides in the membrane. The chain is UPF0154 protein BH2350 from Halalkalibacterium halodurans (strain ATCC BAA-125 / DSM 18197 / FERM 7344 / JCM 9153 / C-125) (Bacillus halodurans).